The chain runs to 625 residues: Branchpoint-bridging protein (625 aa).

A compositionally biased stretch (polar residues) spans 1–16 (MSWRSNAQRTGMNAQP). Disordered stretches follow at residues 1–154 (MSWR…AIGA) and 177–206 (LRSG…RTNT). A compositionally biased stretch (gly residues) spans 22 to 31 (RWGGAGGAGE). Low complexity-rich tracts occupy residues 32–61 (GPSS…SQPY), 70–91 (SSSS…AVAA), and 110–130 (SYAA…GADA). A compositionally biased stretch (basic and acidic residues) spans 177–190 (LRSGDFVPPDRERS). A KH domain is found at 253–330 (YLPIKEFPEI…ASVKKCIKLI (78 aa)). 2 consecutive CCHC-type zinc fingers follow at residues 368 to 385 (QLCK…ECPE) and 393 to 410 (IICH…DCTQ). The tract at residues 466–533 (GPDGKKIPPW…HAYHQQQQAY (68 aa)) is disordered. Residues 488-503 (APRGGDAGRGGWGHRG) show a composition bias toward gly residues. Residues 516–533 (QHQQQQHPHAYHQQQQAY) are compositionally biased toward low complexity.

Belongs to the BBP/SF1 family.

Its subcellular location is the nucleus. Necessary for the splicing of pre-mRNA. Has a role in the recognition of the branch site (5'-UACUAAC-3'), the pyrimidine tract and the 3'-splice site at the 3'-end of introns. The chain is Branchpoint-bridging protein (BBP) from Mycosarcoma maydis (Corn smut fungus).